A 446-amino-acid chain; its full sequence is Tubulin beta-2 chain (446 aa).

8 residues coordinate GTP: glutamine 11, glutamate 69, serine 138, glycine 142, threonine 143, glycine 144, asparagine 204, and asparagine 226. Glutamate 69 is a binding site for Mg(2+). The disordered stretch occupies residues 426 to 446 (QEAGIDEEEEYEEEAPAEHEE). The span at 429 to 440 (GIDEEEEYEEEA) shows a compositional bias: acidic residues.

It belongs to the tubulin family. As to quaternary structure, dimer of alpha and beta chains. A typical microtubule is a hollow water-filled tube with an outer diameter of 25 nm and an inner diameter of 15 nM. Alpha-beta heterodimers associate head-to-tail to form protofilaments running lengthwise along the microtubule wall with the beta-tubulin subunit facing the microtubule plus end conferring a structural polarity. Microtubules usually have 13 protofilaments but different protofilament numbers can be found in some organisms and specialized cells. Requires Mg(2+) as cofactor.

It localises to the cytoplasm. Its subcellular location is the cytoskeleton. In terms of biological role, tubulin is the major constituent of microtubules, a cylinder consisting of laterally associated linear protofilaments composed of alpha- and beta-tubulin heterodimers. Microtubules grow by the addition of GTP-tubulin dimers to the microtubule end, where a stabilizing cap forms. Below the cap, tubulin dimers are in GDP-bound state, owing to GTPase activity of alpha-tubulin. This is Tubulin beta-2 chain from Hypocrea virens (Gliocladium virens).